Here is a 296-residue protein sequence, read N- to C-terminus: Bifunctional protein FolD (296 aa).

NADP(+) contacts are provided by residues 166 to 168, serine 195, and isoleucine 236; that span reads GRS.

It belongs to the tetrahydrofolate dehydrogenase/cyclohydrolase family. In terms of assembly, homodimer.

The enzyme catalyses (6R)-5,10-methylene-5,6,7,8-tetrahydrofolate + NADP(+) = (6R)-5,10-methenyltetrahydrofolate + NADPH. It carries out the reaction (6R)-5,10-methenyltetrahydrofolate + H2O = (6R)-10-formyltetrahydrofolate + H(+). It functions in the pathway one-carbon metabolism; tetrahydrofolate interconversion. In terms of biological role, catalyzes the oxidation of 5,10-methylenetetrahydrofolate to 5,10-methenyltetrahydrofolate and then the hydrolysis of 5,10-methenyltetrahydrofolate to 10-formyltetrahydrofolate. The sequence is that of Bifunctional protein FolD from Chlorobium limicola (strain DSM 245 / NBRC 103803 / 6330).